The chain runs to 476 residues: Protein transport protein Sec61 subunit alpha (476 aa).

Topologically, residues 2–33 (GIKFLEFIKPFCAVLPEIQKPERKIQFREKVL) are cytoplasmic. Residues 34–53 (WTAITLFIFLVCCQIPLFGI) traverse the membrane as a helical segment. At 54 to 76 (MSSDSADPFYWMRVILASNRGTL) the chain is on the lumenal side. Residues 77 to 96 (MELGISPIVTSGLIMQLLAG) form a helical membrane-spanning segment. Over 97–117 (AKIIEVGDTPKDRALFNGAQK) the chain is Cytoplasmic. A helical membrane pass occupies residues 118–138 (LFGMIITIGQAIVYVMTGMYG). Over 139–144 (DPSEMG) the chain is Lumenal. The chain crosses the membrane as a helical span at residues 145–165 (AGICLLIIIQLFVAGLIVLLL). Over 166–172 (DELLQKG) the chain is Cytoplasmic. A helical transmembrane segment spans residues 173–193 (YGLGSGISLFIATNICETIVW). Residues 194-240 (KAFSPTTVNTGRGTEFEGAIIALFHLLATRTDKVRALREAFYRQNLP) lie on the Lumenal side of the membrane. A helical membrane pass occupies residues 241–261 (NILNLIATVFVFAVVIYFQGF). The Cytoplasmic segment spans residues 262-288 (RVDLPIKSARYRGQYNTYPIKLFYTSN). The chain crosses the membrane as a helical span at residues 289–309 (IPIILQSALVSNLYVISQMLS). Topologically, residues 310-354 (TRFSGNFLVNLLGTWSDATSGGPARAYPVAGLCYYLSPPESFGSV) are lumenal. The helical transmembrane segment at 355–375 (LDDPVHAAIYIVFMLGSCAFF) threads the bilayer. Residues 376–420 (SKTWIEVSGSSAKDVAKQLKEQQMVMRGHRETSMVHELNRYIPTA) are Cytoplasmic-facing. A helical membrane pass occupies residues 421–441 (AAFGGLCIGGLSVMADFLGAI). Residues 442–445 (GSGT) are Lumenal-facing. Residues 446 to 462 (GILLAVTIIYQYFEIFV) form a helical membrane-spanning segment. Topologically, residues 463-476 (KEQSEMGSMGALLF) are cytoplasmic.

The protein belongs to the SecY/SEC61-alpha family. As to quaternary structure, the SEC61 channel-forming translocon complex consists of channel-forming core components SEC61A1, SEC61B and SEC61G and different auxiliary components such as SEC62 and SEC63. The SEC61 channel associates with the multi-pass translocon (MPT) complex.

The protein resides in the endoplasmic reticulum membrane. Component of SEC61 channel-forming translocon complex that mediates transport of signal peptide-containing precursor polypeptides across the endoplasmic reticulum (ER). Forms a ribosome receptor and a gated pore in the ER membrane, both functions required for cotranslational translocation of nascent polypeptides. May cooperate with auxiliary protein SEC62, SEC63 and HSPA5/BiP to enable post-translational transport of small presecretory proteins. The SEC61 channel is also involved in ER membrane insertion of transmembrane proteins: it mediates membrane insertion of the first few transmembrane segments of proteins, while insertion of subsequent transmembrane regions of multi-pass membrane proteins is mediated by the multi-pass translocon (MPT) complex. The chain is Protein transport protein Sec61 subunit alpha (sec61a) from Notothenia angustata (Rockcod).